Here is a 1105-residue protein sequence, read N- to C-terminus: Tubulin-folding cofactor D (1105 aa).

N-linked (GlcNAc...) asparagine glycans are attached at residues asparagine 122 and asparagine 126. HEAT repeat units lie at residues isoleucine 308 to tryptophan 345, leucine 347 to alanine 385, serine 401 to lysine 446, and leucine 452 to serine 489. Asparagine 373 carries N-linked (GlcNAc...) asparagine glycosylation. N-linked (GlcNAc...) asparagine glycosylation is found at asparagine 721, asparagine 883, and asparagine 1083.

As to quaternary structure, interacts with alp21.

The protein localises to the cytoplasm. Its subcellular location is the cytoskeleton. Has a function in the folding of beta-tubulin. Microtubule-associated protein that is essential to direct polarized cell growth and to position the nucleus and septum to the center of the cell during mitosis. This Schizosaccharomyces pombe (strain 972 / ATCC 24843) (Fission yeast) protein is Tubulin-folding cofactor D (alp1).